The primary structure comprises 444 residues: Ribosomal protein uS12 methylthiotransferase RimO (444 aa).

The 117-residue stretch at 1 to 117 (MKVGIISLGC…ITEVISSALK (117 aa)) folds into the MTTase N-terminal domain. Residues cysteine 10, cysteine 46, cysteine 80, cysteine 154, cysteine 158, and cysteine 161 each coordinate [4Fe-4S] cluster. The 231-residue stretch at 140–370 (YQPGPSAYIK…WEVQKEITRK (231 aa)) folds into the Radical SAM core domain. One can recognise a TRAM domain in the interval 373–441 (EGLVGTEMRV…DYDLIGEMTN (69 aa)).

The protein belongs to the methylthiotransferase family. RimO subfamily. Requires [4Fe-4S] cluster as cofactor.

The protein localises to the cytoplasm. The enzyme catalyses L-aspartate(89)-[ribosomal protein uS12]-hydrogen + (sulfur carrier)-SH + AH2 + 2 S-adenosyl-L-methionine = 3-methylsulfanyl-L-aspartate(89)-[ribosomal protein uS12]-hydrogen + (sulfur carrier)-H + 5'-deoxyadenosine + L-methionine + A + S-adenosyl-L-homocysteine + 2 H(+). Functionally, catalyzes the methylthiolation of an aspartic acid residue of ribosomal protein uS12. The sequence is that of Ribosomal protein uS12 methylthiotransferase RimO from Natranaerobius thermophilus (strain ATCC BAA-1301 / DSM 18059 / JW/NM-WN-LF).